Reading from the N-terminus, the 373-residue chain is Beta sliding clamp homolog GriR (373 aa).

It belongs to the beta sliding clamp family. Forms a ring-shaped head-to-tail homodimer around DNA which binds and tethers DNA polymerases and other proteins to the DNA. The DNA replisome complex has a single clamp-loading complex (3 tau and 1 each of delta, delta', psi and chi subunits) which binds 3 Pol III cores (1 core on the leading strand and 2 on the lagging strand) each with a beta sliding clamp dimer. Additional proteins in the replisome are other copies of gamma, psi and chi, Ssb, DNA helicase and RNA primase.

Its subcellular location is the cytoplasm. Its function is as follows. A homolog of the beta sliding clamp protein encoded within the biosynthetic cluster for griselimycin synthesis. Upon expression in S.coelicolor A3(2), which is susceptible to this antibiotic, confers resistance to griselimycin. The beta sliding clamp confers DNA tethering and processivity to DNA polymerases and other proteins. Acts as a clamp, forming a ring around DNA (a reaction catalyzed by the clamp-loading complex) which diffuses in an ATP-independent manner freely and bidirectionally along dsDNA. Initially characterized for its ability to contact the catalytic subunit of DNA polymerase III (Pol III), a complex, multichain enzyme responsible for most of the replicative synthesis in bacteria; Pol III exhibits 3'-5' exonuclease proofreading activity. The beta chain is required for initiation of replication as well as for processivity of DNA replication. The chain is Beta sliding clamp homolog GriR from Streptomyces muensis.